We begin with the raw amino-acid sequence, 199 residues long: Pyrrolidone-carboxylate peptidase (199 aa).

Residues glutamate 80, cysteine 142, and histidine 166 contribute to the active site.

Belongs to the peptidase C15 family. In terms of assembly, homotetramer.

It is found in the cytoplasm. It catalyses the reaction Release of an N-terminal pyroglutamyl group from a polypeptide, the second amino acid generally not being Pro.. Its function is as follows. Removes 5-oxoproline from various penultimate amino acid residues except L-proline. In Oceanobacillus iheyensis (strain DSM 14371 / CIP 107618 / JCM 11309 / KCTC 3954 / HTE831), this protein is Pyrrolidone-carboxylate peptidase.